The chain runs to 158 residues: NAD(P)H-quinone oxidoreductase subunit J, chloroplastic (158 aa).

The protein belongs to the complex I 30 kDa subunit family. As to quaternary structure, NDH is composed of at least 16 different subunits, 5 of which are encoded in the nucleus.

The protein resides in the plastid. It localises to the chloroplast thylakoid membrane. It catalyses the reaction a plastoquinone + NADH + (n+1) H(+)(in) = a plastoquinol + NAD(+) + n H(+)(out). The enzyme catalyses a plastoquinone + NADPH + (n+1) H(+)(in) = a plastoquinol + NADP(+) + n H(+)(out). Its function is as follows. NDH shuttles electrons from NAD(P)H:plastoquinone, via FMN and iron-sulfur (Fe-S) centers, to quinones in the photosynthetic chain and possibly in a chloroplast respiratory chain. The immediate electron acceptor for the enzyme in this species is believed to be plastoquinone. Couples the redox reaction to proton translocation, and thus conserves the redox energy in a proton gradient. The chain is NAD(P)H-quinone oxidoreductase subunit J, chloroplastic from Helianthus annuus (Common sunflower).